The sequence spans 230 residues: Large ribosomal subunit protein uL1 (230 aa).

This sequence belongs to the universal ribosomal protein uL1 family. In terms of assembly, part of the 50S ribosomal subunit.

In terms of biological role, binds directly to 23S rRNA. The L1 stalk is quite mobile in the ribosome, and is involved in E site tRNA release. Functionally, protein L1 is also a translational repressor protein, it controls the translation of the L11 operon by binding to its mRNA. This is Large ribosomal subunit protein uL1 from Bifidobacterium longum subsp. infantis (strain ATCC 15697 / DSM 20088 / JCM 1222 / NCTC 11817 / S12).